We begin with the raw amino-acid sequence, 236 residues long: 1-(5-phosphoribosyl)-5-[(5-phosphoribosylamino)methylideneamino] imidazole-4-carboxamide isomerase (236 aa).

The active-site Proton acceptor is aspartate 8. Aspartate 127 acts as the Proton donor in catalysis.

The protein belongs to the HisA/HisF family.

The protein resides in the cytoplasm. The enzyme catalyses 1-(5-phospho-beta-D-ribosyl)-5-[(5-phospho-beta-D-ribosylamino)methylideneamino]imidazole-4-carboxamide = 5-[(5-phospho-1-deoxy-D-ribulos-1-ylimino)methylamino]-1-(5-phospho-beta-D-ribosyl)imidazole-4-carboxamide. The protein operates within amino-acid biosynthesis; L-histidine biosynthesis; L-histidine from 5-phospho-alpha-D-ribose 1-diphosphate: step 4/9. The polypeptide is 1-(5-phosphoribosyl)-5-[(5-phosphoribosylamino)methylideneamino] imidazole-4-carboxamide isomerase (Campylobacter fetus subsp. fetus (strain 82-40)).